The sequence spans 825 residues: Arabinolytic transcriptional activator araR (825 aa).

The segment covering 1 to 17 (MASSHQGNGTVPNSQTD) has biased composition (polar residues). A disordered region spans residues 1–28 (MASSHQGNGTVPNSQTDAPPDSSTKRRW). The zn(2)-C6 fungal-type DNA-binding region spans 35–61 (CDSCHARRVRCDRQFPCSRCLRSEITC). The disordered stretch occupies residues 117-152 (STFHHRSPPANAPTVSAPSVDGRRSQTDPQLPVRRP).

This sequence belongs to the xlnR/xlr1 family. araR subfamily.

Its subcellular location is the nucleus. Its function is as follows. Transcriptional activator of the arabinanolytic system. Involved in the regulation of extracellular arabinanolytic genes and in the regulation of the intracellular activities of L-arabinose catabolic genes in the pentose catabolic pathway (PCP) in response to the presence of L-arabinose. The protein is Arabinolytic transcriptional activator araR of Emericella nidulans (strain FGSC A4 / ATCC 38163 / CBS 112.46 / NRRL 194 / M139) (Aspergillus nidulans).